The primary structure comprises 256 residues: Lysine-rich coiled-coil protein 1 (256 aa).

Disordered regions lie at residues 61-83 and 141-256; these read QRIP…TEDR and GHST…ILGF. Composition is skewed to polar residues over residues 64 to 79 and 141 to 153; these read PSGT…SSSQ and GHST…SHRQ. 2 stretches are compositionally biased toward basic and acidic residues: residues 161–188 and 218–227; these read HLEE…DLNK and KNRDVSSKKE. A coiled-coil region spans residues 208–247; the sequence is TEKLKNRKEKKNRDVSSKKEDRKRRKEKKEQGEERTEEEM.

This Rattus norvegicus (Rat) protein is Lysine-rich coiled-coil protein 1 (Krcc1).